The following is a 215-amino-acid chain: MTVQRFIEYTPFDSNGQQLPGESRKITLNVLLEDSGNYLIHRDILRHQLSQKQGTVSTKTRSEVRGGGKKPWRQKGTGRARAGSSRSPLWKGGGVIFGPKPKTANLKLNKKERNLALQTLLYNKRDIITQVSTLDIKNVKTKEFYNFCKEKGFNLNEKLLVIDSEKTTPLKLSTRNLKNVELISASNLNTLSLLKAKKILVTTSALNDIKEIYCG.

The segment at 51 to 87 is disordered; sequence QKQGTVSTKTRSEVRGGGKKPWRQKGTGRARAGSSRS. Over residues 67-78 the composition is skewed to basic residues; that stretch reads GGKKPWRQKGTG.

The protein belongs to the universal ribosomal protein uL4 family. Part of the 50S ribosomal subunit.

Its subcellular location is the plastid. It is found in the chloroplast. Its function is as follows. Probably binds the 23S rRNA. This is Large ribosomal subunit protein uL4c (rpl4) from Thalassiosira pseudonana (Marine diatom).